The following is a 283-amino-acid chain: tRNA-cytidine(32) 2-sulfurtransferase (283 aa).

The PP-loop motif signature appears at 37–42; it reads SGGKDS. Cys-112, Cys-115, and Cys-203 together coordinate [4Fe-4S] cluster.

It belongs to the TtcA family. In terms of assembly, homodimer. Mg(2+) serves as cofactor. Requires [4Fe-4S] cluster as cofactor.

It localises to the cytoplasm. The enzyme catalyses cytidine(32) in tRNA + S-sulfanyl-L-cysteinyl-[cysteine desulfurase] + AH2 + ATP = 2-thiocytidine(32) in tRNA + L-cysteinyl-[cysteine desulfurase] + A + AMP + diphosphate + H(+). Its pathway is tRNA modification. Functionally, catalyzes the ATP-dependent 2-thiolation of cytidine in position 32 of tRNA, to form 2-thiocytidine (s(2)C32). The sulfur atoms are provided by the cysteine/cysteine desulfurase (IscS) system. This is tRNA-cytidine(32) 2-sulfurtransferase from Legionella pneumophila subsp. pneumophila (strain Philadelphia 1 / ATCC 33152 / DSM 7513).